The chain runs to 116 residues: Iron-sulfur cluster assembly protein CyaY (116 aa).

Belongs to the frataxin family.

In terms of biological role, involved in iron-sulfur (Fe-S) cluster assembly. May act as a regulator of Fe-S biogenesis. The protein is Iron-sulfur cluster assembly protein CyaY of Buchnera aphidicola subsp. Acyrthosiphon pisum (strain APS) (Acyrthosiphon pisum symbiotic bacterium).